The following is a 238-amino-acid chain: MKKAKILSGVLLLCFSSPLISQAATLDVRGGYRSGSHAYETRLKVSEGWQNGWWASMESNTWNTIHDNKKENAALNDVQVEVNYAIKLDDQWTVRPGMLTHFSSNGTRYGPYVKLSWDATKDLKFGIRYRYDWKAYRQQDLSGDMSRDNVHRWDGYVTYHINSDFTFAWQTTLYSKQNDYRYANHKKWATENAFVLQYHMTPDITPYIEYDYLDRQGVYNGRDNLSENSYRIGVSFKL.

An N-terminal signal peptide occupies residues 1-23 (MKKAKILSGVLLLCFSSPLISQA). Residues 24 to 25 (AT) are Periplasmic-facing. A transmembrane span lies at residues 26 to 32 (LDVRGGY). Topologically, residues 33–39 (RSGSHAY) are extracellular. The chain crosses the lipid bilayer at residues 40–49 (ETRLKVSEGW). Topologically, residues 50–52 (QNG) are periplasmic. The hydrophobic stretch at 53–61 (WWASMESNT) threads the membrane. The Extracellular segment spans residues 62-76 (WNTIHDNKKENAALN). Residues 77–86 (DVQVEVNYAI) are membrane-embedded. Over 87–91 (KLDDQ) the chain is Periplasmic. At 92-102 (WTVRPGMLTHF) the chain is embedded in the membrane. Residues 103-107 (SSNGT) are Extracellular-facing. A transmembrane helix spans residues 108 to 117 (RYGPYVKLSW). Residues 118–122 (DATKD) lie on the Periplasmic side of the membrane. The segment at 123–132 (LKFGIRYRYD) is a transmembrane helix. Residues 133-151 (WKAYRQQDLSGDMSRDNVH) lie on the Extracellular side of the membrane. Residues 152 to 159 (RWDGYVTY) are membrane-embedded. The Periplasmic segment spans residues 160 to 164 (HINSD). The segment at 165-173 (FTFAWQTTL) is a transmembrane helix. Topologically, residues 174–190 (YSKQNDYRYANHKKWAT) are extracellular. At 191–200 (ENAFVLQYHM) the chain is embedded in the membrane. The Periplasmic segment spans residues 201–203 (TPD). Positions 204-212 (ITPYIEYDY) form a transmembrane segment. Over 213 to 228 (LDRQGVYNGRDNLSEN) the chain is Extracellular. Positions 229–236 (SYRIGVSF) form a transmembrane segment. The Periplasmic portion of the chain corresponds to 237–238 (KL).

This sequence belongs to the oligogalacturonate-specific porin KdgM (TC 1.B.35) family. NanC subfamily. Monomer.

The protein resides in the cell outer membrane. The enzyme catalyses N-acetylneuraminate(in) = N-acetylneuraminate(out). Outer membrane channel protein allowing the entry of N-acetylneuraminic acid (Neu5Ac, the most abundant sialic acid on host cell surfaces) into the bacteria. NanC proteins form high-conductance channels which are open at low membrane potentials and which have a weak anion selectivity. The protein is N-acetylneuraminic acid outer membrane channel protein NanC (nanC) of Escherichia coli O6:H1 (strain CFT073 / ATCC 700928 / UPEC).